The following is a 237-amino-acid chain: 2-C-methyl-D-erythritol 4-phosphate cytidylyltransferase (237 aa).

It belongs to the IspD/TarI cytidylyltransferase family. IspD subfamily.

The catalysed reaction is 2-C-methyl-D-erythritol 4-phosphate + CTP + H(+) = 4-CDP-2-C-methyl-D-erythritol + diphosphate. It participates in isoprenoid biosynthesis; isopentenyl diphosphate biosynthesis via DXP pathway; isopentenyl diphosphate from 1-deoxy-D-xylulose 5-phosphate: step 2/6. Functionally, catalyzes the formation of 4-diphosphocytidyl-2-C-methyl-D-erythritol from CTP and 2-C-methyl-D-erythritol 4-phosphate (MEP). The sequence is that of 2-C-methyl-D-erythritol 4-phosphate cytidylyltransferase from Paraburkholderia xenovorans (strain LB400).